A 279-amino-acid polypeptide reads, in one-letter code: Bifunctional protein FolD (279 aa).

NADP(+)-binding positions include 166–168 (GRS) and Ser191.

The protein belongs to the tetrahydrofolate dehydrogenase/cyclohydrolase family. Homodimer.

The enzyme catalyses (6R)-5,10-methylene-5,6,7,8-tetrahydrofolate + NADP(+) = (6R)-5,10-methenyltetrahydrofolate + NADPH. It carries out the reaction (6R)-5,10-methenyltetrahydrofolate + H2O = (6R)-10-formyltetrahydrofolate + H(+). Its pathway is one-carbon metabolism; tetrahydrofolate interconversion. In terms of biological role, catalyzes the oxidation of 5,10-methylenetetrahydrofolate to 5,10-methenyltetrahydrofolate and then the hydrolysis of 5,10-methenyltetrahydrofolate to 10-formyltetrahydrofolate. This is Bifunctional protein FolD from Shouchella clausii (strain KSM-K16) (Alkalihalobacillus clausii).